Reading from the N-terminus, the 160-residue chain is Putative UPF0479 protein YIL177W-A (160 aa).

A run of 2 helical transmembrane segments spans residues 39-59 (IVFCLPFFLALFFVPVQKVLQ) and 136-156 (VPMIWLDVFQVFFVFLVISQH).

Belongs to the UPF0479 family.

Its subcellular location is the membrane. In Saccharomyces cerevisiae (strain ATCC 204508 / S288c) (Baker's yeast), this protein is Putative UPF0479 protein YIL177W-A.